The following is a 134-amino-acid chain: Lymphocyte antigen 6 complex locus protein G6d (134 aa).

An N-terminal signal peptide occupies residues methionine 1–glycine 19. The UPAR/Ly6 domain occupies methionine 22 to leucine 121. 5 cysteine pairs are disulfide-bonded: cysteine 24–cysteine 48, cysteine 27–cysteine 35, cysteine 42–cysteine 76, cysteine 82–cysteine 101, and cysteine 102–cysteine 107. O-linked (GalNAc...) threonine glycosylation is present at threonine 68. Residue asparagine 108 is the site of GPI-anchor amidated asparagine attachment. Positions glycine 109 to glutamine 134 are cleaved as a propeptide — removed in mature form.

As to quaternary structure, homodimer. O-glycosylated.

It localises to the cell membrane. This is Lymphocyte antigen 6 complex locus protein G6d (Ly6g6d) from Rattus norvegicus (Rat).